Consider the following 180-residue polypeptide: Crossover junction endodeoxyribonuclease RuvC (180 aa).

Catalysis depends on residues Asp-7, Glu-66, and Asp-138. Mg(2+) is bound by residues Asp-7, Glu-66, and Asp-138.

This sequence belongs to the RuvC family. Homodimer which binds Holliday junction (HJ) DNA. The HJ becomes 2-fold symmetrical on binding to RuvC with unstacked arms; it has a different conformation from HJ DNA in complex with RuvA. In the full resolvosome a probable DNA-RuvA(4)-RuvB(12)-RuvC(2) complex forms which resolves the HJ. It depends on Mg(2+) as a cofactor.

The protein localises to the cytoplasm. It catalyses the reaction Endonucleolytic cleavage at a junction such as a reciprocal single-stranded crossover between two homologous DNA duplexes (Holliday junction).. Functionally, the RuvA-RuvB-RuvC complex processes Holliday junction (HJ) DNA during genetic recombination and DNA repair. Endonuclease that resolves HJ intermediates. Cleaves cruciform DNA by making single-stranded nicks across the HJ at symmetrical positions within the homologous arms, yielding a 5'-phosphate and a 3'-hydroxyl group; requires a central core of homology in the junction. The consensus cleavage sequence is 5'-(A/T)TT(C/G)-3'. Cleavage occurs on the 3'-side of the TT dinucleotide at the point of strand exchange. HJ branch migration catalyzed by RuvA-RuvB allows RuvC to scan DNA until it finds its consensus sequence, where it cleaves and resolves the cruciform DNA. This is Crossover junction endodeoxyribonuclease RuvC from Burkholderia orbicola (strain AU 1054).